A 418-amino-acid chain; its full sequence is Voltage-gated ClC-type chloride channel ClcB (418 aa).

Transmembrane regions (helical) follow at residues 5–25, 54–74, 146–166, 168–188, 222–242, 258–278, 291–311, 316–336, 352–372, and 380–400; these read LLIA…FRHA, LLTP…WQKF, LWIA…PLAG, LFIA…PVII, ALII…LTLM, WQLA…PAVW, APPL…AVLA, GAPG…GMLY, LLLG…APIM, and MTGE…ASVI.

Belongs to the chloride channel (TC 2.A.49) family. ClcB subfamily.

It localises to the cell inner membrane. Probably acts as an electrical shunt for an outwardly-directed proton pump that is linked to amino acid decarboxylation, as part of the extreme acid resistance (XAR) response. The sequence is that of Voltage-gated ClC-type chloride channel ClcB from Escherichia coli O17:K52:H18 (strain UMN026 / ExPEC).